The primary structure comprises 118 residues: MFKYKQVMIVRSDLKLSKGKLAVQVAHGAVTAAFKAYKEKPEWFKGWFNEGQKKVVVKAESERELFELKAEAEKLGIPNSLIRDAGLTEIPPGTITCLAIGPGPEEIVNKITGNLKLV.

The protein belongs to the PTH2 family.

The protein resides in the cytoplasm. The enzyme catalyses an N-acyl-L-alpha-aminoacyl-tRNA + H2O = an N-acyl-L-amino acid + a tRNA + H(+). In terms of biological role, the natural substrate for this enzyme may be peptidyl-tRNAs which drop off the ribosome during protein synthesis. In Thermococcus sibiricus (strain DSM 12597 / MM 739), this protein is Peptidyl-tRNA hydrolase.